A 559-amino-acid chain; its full sequence is Urocanate hydratase (559 aa).

NAD(+) is bound by residues 50-51 (GG), Q128, 174-176 (GMG), D194, R199, 240-241 (NA), 261-265 (QTSAH), 271-272 (YI), and Y320. C408 is an active-site residue. An NAD(+)-binding site is contributed by G490.

Belongs to the urocanase family. NAD(+) is required as a cofactor.

The protein localises to the cytoplasm. The catalysed reaction is 4-imidazolone-5-propanoate = trans-urocanate + H2O. It participates in amino-acid degradation; L-histidine degradation into L-glutamate; N-formimidoyl-L-glutamate from L-histidine: step 2/3. Catalyzes the conversion of urocanate to 4-imidazolone-5-propionate. This is Urocanate hydratase from Halalkalibacterium halodurans (strain ATCC BAA-125 / DSM 18197 / FERM 7344 / JCM 9153 / C-125) (Bacillus halodurans).